The chain runs to 142 residues: Non-specific lipid transfer protein GPI-anchored 34 (142 aa).

An N-terminal signal peptide occupies residues 1-22 (MAVAVTAVLFLAVVIAPQWTET). The segment at 21-43 (ETKKPPRPSDTSDTSGTSGRDRR) is disordered. Low complexity predominate over residues 29–38 (SDTSDTSGTS). Disulfide bonds link cysteine 46-cysteine 85, cysteine 57-cysteine 69, cysteine 70-cysteine 106, and cysteine 83-cysteine 114. A lipid anchor (GPI-anchor amidated asparagine) is attached at asparagine 120. A propeptide spans 121–142 (GGATKKIVASMGLFGVVASLFF) (removed in mature form).

Belongs to the plant LTP family.

It localises to the cell membrane. Functionally, probable lipid transfer protein. This Arabidopsis thaliana (Mouse-ear cress) protein is Non-specific lipid transfer protein GPI-anchored 34.